A 224-amino-acid polypeptide reads, in one-letter code: Urease accessory protein UreF (224 aa).

Belongs to the UreF family. As to quaternary structure, ureD, UreF and UreG form a complex that acts as a GTP-hydrolysis-dependent molecular chaperone, activating the urease apoprotein by helping to assemble the nickel containing metallocenter of UreC. The UreE protein probably delivers the nickel.

It is found in the cytoplasm. Its function is as follows. Required for maturation of urease via the functional incorporation of the urease nickel metallocenter. The chain is Urease accessory protein UreF from Pseudomonas entomophila (strain L48).